Reading from the N-terminus, the 250-residue chain is Ubiquinone/menaquinone biosynthesis C-methyltransferase UbiE (250 aa).

S-adenosyl-L-methionine contacts are provided by residues Thr73, Asp94, 122–123 (NA), and Ser139.

Belongs to the class I-like SAM-binding methyltransferase superfamily. MenG/UbiE family.

The catalysed reaction is a 2-demethylmenaquinol + S-adenosyl-L-methionine = a menaquinol + S-adenosyl-L-homocysteine + H(+). It carries out the reaction a 2-methoxy-6-(all-trans-polyprenyl)benzene-1,4-diol + S-adenosyl-L-methionine = a 5-methoxy-2-methyl-3-(all-trans-polyprenyl)benzene-1,4-diol + S-adenosyl-L-homocysteine + H(+). It participates in quinol/quinone metabolism; menaquinone biosynthesis; menaquinol from 1,4-dihydroxy-2-naphthoate: step 2/2. It functions in the pathway cofactor biosynthesis; ubiquinone biosynthesis. Its function is as follows. Methyltransferase required for the conversion of demethylmenaquinol (DMKH2) to menaquinol (MKH2) and the conversion of 2-polyprenyl-6-methoxy-1,4-benzoquinol (DDMQH2) to 2-polyprenyl-3-methyl-6-methoxy-1,4-benzoquinol (DMQH2). This chain is Ubiquinone/menaquinone biosynthesis C-methyltransferase UbiE, found in Francisella tularensis subsp. holarctica (strain FTNF002-00 / FTA).